Consider the following 421-residue polypeptide: Acylglycerol kinase, mitochondrial (421 aa).

N6-acetyllysine is present on K6. A hydrophobic region spans residues 15–31; that stretch reads TTAGLCLLTWGGHWLYG. The 142-residue stretch at 58–199 folds into the DAGKc domain; the sequence is AQVKKATVFL…LDVLQIKGEK (142 aa). The interval 252–271 is disordered; that stretch reads ISYTGPRERPPIEPEETPPR.

The protein belongs to the AGK family. As to quaternary structure, component of the TIM22 complex, which core is composed of TIMM22, associated with TIMM10 (TIMM10A and/or TIMM10B), TIMM9, AGK and TIMM29. Interacts with SMIM26. Requires Mg(2+) as cofactor. Ubiquitously expressed.

Its subcellular location is the mitochondrion inner membrane. The protein localises to the mitochondrion intermembrane space. The catalysed reaction is a monoacylglycerol + ATP = a monoacyl-sn-glycero-3-phosphate + ADP + H(+). The enzyme catalyses a 1,2-diacyl-sn-glycerol + ATP = a 1,2-diacyl-sn-glycero-3-phosphate + ADP + H(+). It carries out the reaction an N-acylsphing-4-enine + ATP = an N-acylsphing-4-enine 1-phosphate + ADP + H(+). It catalyses the reaction 1,2-di-(9Z-octadecenoyl)-sn-glycerol + ATP = 1,2-di-(9Z-octadecenoyl)-sn-glycero-3-phosphate + ADP + H(+). The catalysed reaction is 1-(9Z-octadecenoyl)-sn-glycerol + ATP = 1-(9Z-octadecenoyl)-sn-glycero-3-phosphate + ADP + H(+). The enzyme catalyses 1-(5Z,8Z,11Z,14Z-eicosatetraenoyl)-sn-glycerol + ATP = 1-(5Z,8Z,11Z,14Z-eicosatetraenoyl)-sn-glycero-3-phosphate + ADP + H(+). It carries out the reaction a 1-acyl-sn-glycerol + ATP = a 1-acyl-sn-glycero-3-phosphate + ADP + H(+). It catalyses the reaction 1-hexadecanoyl-sn-glycerol + ATP = 1-hexadecanoyl-sn-glycero-3-phosphate + ADP + H(+). The catalysed reaction is a 2-acylglycerol + ATP = a 2-acyl-sn-glycerol 3-phosphate + ADP + H(+). The enzyme catalyses 2-(5Z,8Z,11Z,14Z-eicosatetraenoyl)-glycerol + ATP = 2-(5Z,8Z,11Z,14Z-eicosatetraenoyl)-sn-glycero-3-phosphate + ADP + H(+). It carries out the reaction N-(hexanoyl)sphing-4-enine + ATP = N-hexanoylsphing-4-enine 1-phosphate + ADP + H(+). It functions in the pathway lipid metabolism; glycerolipid metabolism. Its activity is regulated as follows. Both the ceramide and diacylglycerol kinase activities are inhibited by sphingosine and stimulated by cardiolipin. Both activities are stimulated by calcium when magnesium concentrations are low but inhibited by calcium when magnesium concentrations are high. Lipid kinase that can phosphorylate both monoacylglycerol and diacylglycerol to form lysophosphatidic acid (LPA) and phosphatidic acid (PA), respectively. Phosphorylates ceramide but not sphingosine. Phosphorylates 1,2-dioleoylglycerol more rapidly than 2,3-dioleoylglycerol. Independently of its lipid kinase activity, acts as a component of the TIM22 complex. The TIM22 complex mediates the import and insertion of multi-pass transmembrane proteins into the mitochondrial inner membrane by forming a twin-pore translocase that uses the membrane potential as the external driving force. In the TIM22 complex, required for the import of a subset of metabolite carriers into mitochondria, such as ANT1/SLC25A4 and SLC25A24, while it is not required for the import of TIMM23. Overexpression increases the formation and secretion of LPA, resulting in transactivation of EGFR and activation of the downstream MAPK signaling pathway, leading to increased cell growth. This Mus musculus (Mouse) protein is Acylglycerol kinase, mitochondrial.